A 582-amino-acid chain; its full sequence is MVQESRPGSVRSYSVGYQARSRSSSQRRHSLTRQRSSQRLIRTISIESDVSNITDDDDLRAVNEGVAGVQLDVSETANKGPRRASATDVTDSLGSTSSEYIEIPFVKETLDASLPSDYLKQDILNLIQSLKISKWYNNKKIQPVAQDMNLVKISGAMTNAIFKVEYPKLPSLLLRIYGPNIDNIIDREYELQILARLSLKNIGPSLYGCFVNGRFEQFLENSKTLTKDDIRNWKNSQRIARRMKELHVGVPLLSSERKNGSACWQKINQWLRTIEKVDQWVGDPKNIENSLLCENWSKFMDIVDRYHKWLISQEQGIEQVNKNLIFCHNDAQYGNLLFTAPVMNTPSLYTAPSSTSLTSQSSSLFPSSSNVIVDDIINPPKQEQSQDSKLVVIDFEYAGANPAAYDLANHLSEWMYDYNNAKAPHQCHADRYPDKEQVLNFLYSYVSHLRGGAKEPIDEEVQRLYKSIIQWRPTVQLFWSLWAILQSGKLEKKEASTAITREEIGPNGKKYIIKTEPESPEEDFVENDDEPEAGVSIDTFDYMAYGRDKIAVFWGDLIGLGIITEEECKNFSSFKFLDTSYL.

The segment at 1–36 (MVQESRPGSVRSYSVGYQARSRSSSQRRHSLTRQRS) is disordered. S30 is subject to Phosphoserine; by PKA. Phosphoserine occurs at positions 48 and 51. The residue at position 54 (T54) is a Phosphothreonine. S85 carries the phosphoserine; by PKA modification.

Belongs to the choline/ethanolamine kinase family. Monomer. Interacts with NAP1. Mg(2+) is required as a cofactor.

It localises to the cytoplasm. It carries out the reaction choline + ATP = phosphocholine + ADP + H(+). It catalyses the reaction ethanolamine + ATP = phosphoethanolamine + ADP + H(+). It participates in phospholipid metabolism; phosphatidylcholine biosynthesis; phosphocholine from choline: step 1/1. In terms of biological role, catalyzes the committed step in the synthesis of phosphatidylcholine by the CDP-choline pathway. Also exhibits ethanolamine kinase activity but it is a poor substrate at 14% efficiency compared with choline. The polypeptide is Choline kinase (Saccharomyces cerevisiae (strain ATCC 204508 / S288c) (Baker's yeast)).